A 523-amino-acid chain; its full sequence is NAD(P)H-quinone oxidoreductase subunit 2 (523 aa).

The next 14 helical transmembrane spans lie at alanine 29–alanine 49, tryptophan 57–tryptophan 77, leucine 94–tryptophan 114, proline 123–glycine 143, leucine 147–tyrosine 167, leucine 182–leucine 202, proline 221–phenylalanine 243, proline 255–leucine 275, leucine 291–glutamine 311, methionine 317–threonine 337, valine 345–phenylalanine 365, leucine 389–glycine 409, leucine 424–isoleucine 444, and isoleucine 477–phenylalanine 497.

It belongs to the complex I subunit 2 family. As to quaternary structure, NDH-1 can be composed of about 15 different subunits; different subcomplexes with different compositions have been identified which probably have different functions.

The protein resides in the cellular thylakoid membrane. The enzyme catalyses a plastoquinone + NADH + (n+1) H(+)(in) = a plastoquinol + NAD(+) + n H(+)(out). It catalyses the reaction a plastoquinone + NADPH + (n+1) H(+)(in) = a plastoquinol + NADP(+) + n H(+)(out). Its function is as follows. NDH-1 shuttles electrons from an unknown electron donor, via FMN and iron-sulfur (Fe-S) centers, to quinones in the respiratory and/or the photosynthetic chain. The immediate electron acceptor for the enzyme in this species is believed to be plastoquinone. Couples the redox reaction to proton translocation, and thus conserves the redox energy in a proton gradient. Cyanobacterial NDH-1 also plays a role in inorganic carbon-concentration. In Prochlorococcus marinus (strain MIT 9303), this protein is NAD(P)H-quinone oxidoreductase subunit 2.